The primary structure comprises 79 residues: Ixosin (79 aa).

A propeptide spans 1–56 (MSAHKVQIGLSSGQFRVALQVPSVRLKGLGSFHTGSIVLPSQGSLREDQISLHNQD) (removed in mature form).

In terms of biological role, has antifungal activity against C.albicans. Has antibacterial activity against the Gram-positive bacterium S.aureus and the Gram-negative bacterium E.coli. Lacks hemolytic activity against rabbit erythrocytes. The sequence is that of Ixosin from Ixodes sinensis (Hard tick).